The sequence spans 442 residues: Citrate transporter CitP (442 aa).

The next 13 helical transmembrane spans lie at 27–47, 59–79, 83–103, 114–134, 151–171, 177–197, 209–229, 267–287, 293–313, 321–341, 349–369, 387–409, and 421–441; these read ISGIGLIAYAFMAVLLIIAIS, IFALVLMGHVFYYLGAHLPIF, LGGGSVFTILLTAILVATNVI, FINGMDFLGLYIVSLIASSLF, VAFISMALTAVVIGIVGVIIG, AILYIAMPIMAGGVGAGIVPL, SAGILSKLFPTVILGNLLAII, YVQLGVGLIIAVMFFMIGTML, GINAYAFIILSIVLTKAFGLL, VIMFGQVIVKNMTHALLAGVG, VLLAALSWQFVVLCLVSIVAI, AAITAGLANNSMGGTGNVAVLAA, and MGNRIGGALILVVAGILVTFM.

The protein belongs to the 2-hydroxycarboxylate transporter (2-HCT) (TC 2.A.24) family.

It is found in the cell membrane. The enzyme catalyses (R)-lactate(in) + citrate(out) = (R)-lactate(out) + citrate(in). It carries out the reaction (S)-lactate(in) + citrate(out) = (S)-lactate(out) + citrate(in). It catalyses the reaction citrate(in) + H(+)(in) = citrate(out) + H(+)(out). Its activity is regulated as follows. The transport of citrate is unaffected by the presence of citrate in the growth media. In terms of biological role, secondary transporter involved in citrate metabolism. During cometabolism of citrate and glucose, catalyzes the uptake of divalent citrate into the cell coupled to the exit of monovalent lactate, the end product of glycolysis in L.lactis. The citrate/lactate exchange is electrogenic and results in the generation of a membrane potential. Plays an important role in resistance against lactate toxicity at low pH. In the absence of glucose, i.e. when no lactate is produced, CitP catalyzes the uptake of citrate in exchange with the citrate metabolism intermediates pyruvate and alpha-acetolactate, and the end product acetate. In the absence of glucose, CitP can also catalyze the proton-dependent transport of citrate. In vitro, shows a broad substrate specificity. Can transport a wide variety of mono- and dicarboxylates of the form X-CR(2)-COO(-), where X represents OH (2-hydroxy acid), O (2-keto acid), or H (acid) and R groups differ in size, hydrophobicity and composition. Many of the substrates are intermediates or products of amino acid metabolism, suggesting that CitP may have a broader physiological function than its role in citrate metabolism. This Lactococcus lactis subsp. lactis (Streptococcus lactis) protein is Citrate transporter CitP.